Reading from the N-terminus, the 517-residue chain is Ribonuclease Y (517 aa).

A helical membrane pass occupies residues 1–21 (MIESLIALIAAIVGLGIGYLV). A KH domain is found at 207–273 (LINVINIKND…TKVIELLVED (67 aa)). One can recognise an HD domain in the interval 333 to 426 (ALAHSLEVAH…VCAADTLSAA (94 aa)).

The protein belongs to the RNase Y family.

Its subcellular location is the cell membrane. Its function is as follows. Endoribonuclease that initiates mRNA decay. The protein is Ribonuclease Y of Campylobacter jejuni subsp. doylei (strain ATCC BAA-1458 / RM4099 / 269.97).